The sequence spans 596 residues: Phosphoenolpyruvate carboxykinase [GTP] (596 aa).

Substrate-binding positions include arginine 77 and tyrosine 205–glycine 207. Mn(2+) contacts are provided by lysine 214 and histidine 234. Serine 256 lines the substrate pocket. Alanine 257–asparagine 262 provides a ligand contact to GTP. The active site involves cysteine 258. A Mn(2+)-binding site is contributed by aspartate 283. The segment at lysine 362–proline 388 is disordered. Asparagine 373–arginine 375 is a binding site for substrate. GTP contacts are provided by residues arginine 375, arginine 406, and tyrosine 499–asparagine 502.

This sequence belongs to the phosphoenolpyruvate carboxykinase [GTP] family. In terms of assembly, monomer. The cofactor is Mn(2+).

It is found in the cytoplasm. It catalyses the reaction oxaloacetate + GTP = phosphoenolpyruvate + GDP + CO2. Its pathway is carbohydrate biosynthesis; gluconeogenesis. In terms of biological role, catalyzes the conversion of oxaloacetate (OAA) to phosphoenolpyruvate (PEP), the rate-limiting step in the metabolic pathway that produces glucose from lactate and other precursors derived from the citric acid cycle. In Anaeromyxobacter sp. (strain K), this protein is Phosphoenolpyruvate carboxykinase [GTP].